The primary structure comprises 160 residues: MLSPKRTKFRKQHRGRMKGIASKGNTIAFGQFALQAQDCGWVTARQIEASRRAMTRYVKRGGKIWIRIFPDKPVTMRPAETRMGSGKGNPEFWVAVVKPGRILFEMGGEEITEEIAKEAMRLAQYKLPVKTKFISSDKIVGGDSPVEKAIEKESTEEVKK.

This sequence belongs to the universal ribosomal protein uL16 family. As to quaternary structure, part of the 50S ribosomal subunit.

Functionally, binds 23S rRNA and is also seen to make contacts with the A and possibly P site tRNAs. The chain is Large ribosomal subunit protein uL16 from Prochlorococcus marinus (strain MIT 9515).